A 78-amino-acid chain; its full sequence is MTIKDELNRILWTRRDLENYSVLIVDRFKGLVEIPFPRIERVDNTYIYLDDDTVIPIHRVMEIRMKGQVIWSRTANRR.

This sequence belongs to the UPF0248 family.

This is UPF0248 protein Msed_0897 from Metallosphaera sedula (strain ATCC 51363 / DSM 5348 / JCM 9185 / NBRC 15509 / TH2).